The following is a 598-amino-acid chain: Membrane protein insertase YidC (598 aa).

Residues 7–27 (NYFIAIALSVLIVLGWQFLYM) traverse the membrane as a helical segment. The interval 37–76 (AQEAQKAQQQTEQVQQPAAGGQTPAQTSGAAPSGQAAATA) is disordered. Over residues 40 to 76 (AQKAQQQTEQVQQPAAGGQTPAQTSGAAPSGQAAATA) the composition is skewed to low complexity. A run of 4 helical transmembrane segments spans residues 377–397 (FGVA…PLAS), 447–467 (WPVA…YITI), 492–512 (LFGL…WPLI), and 538–558 (WMPL…VIYW).

Belongs to the OXA1/ALB3/YidC family. Type 1 subfamily. As to quaternary structure, interacts with the Sec translocase complex via SecD. Specifically interacts with transmembrane segments of nascent integral membrane proteins during membrane integration.

The protein localises to the cell inner membrane. In terms of biological role, required for the insertion and/or proper folding and/or complex formation of integral membrane proteins into the membrane. Involved in integration of membrane proteins that insert both dependently and independently of the Sec translocase complex, as well as at least some lipoproteins. Aids folding of multispanning membrane proteins. The chain is Membrane protein insertase YidC from Rhizobium johnstonii (strain DSM 114642 / LMG 32736 / 3841) (Rhizobium leguminosarum bv. viciae).